Consider the following 141-residue polypeptide: Large ribosomal subunit protein uL11 (141 aa).

Belongs to the universal ribosomal protein uL11 family. As to quaternary structure, part of the ribosomal stalk of the 50S ribosomal subunit. Interacts with L10 and the large rRNA to form the base of the stalk. L10 forms an elongated spine to which L12 dimers bind in a sequential fashion forming a multimeric L10(L12)X complex. In terms of processing, one or more lysine residues are methylated.

In terms of biological role, forms part of the ribosomal stalk which helps the ribosome interact with GTP-bound translation factors. The sequence is that of Large ribosomal subunit protein uL11 from Brevibacillus brevis (strain 47 / JCM 6285 / NBRC 100599).